Here is a 144-residue protein sequence, read N- to C-terminus: Catabolic 3-dehydroquinase (144 aa).

Tyr-24 serves as the catalytic Proton acceptor. The substrate site is built by Asn-76, His-82, and Asp-89. His-102 serves as the catalytic Proton donor. Substrate-binding positions include 103–104 (IT) and Arg-113.

The protein belongs to the type-II 3-dehydroquinase family. In terms of assembly, homododecamer. Adopts a ring-like structure, composed of an arrangement of two hexameric rings stacked on top of one another.

It catalyses the reaction 3-dehydroquinate = 3-dehydroshikimate + H2O. The protein operates within aromatic compound metabolism; 3,4-dihydroxybenzoate biosynthesis; 3,4-dihydroxybenzoate from 3-dehydroquinate: step 1/2. In terms of biological role, is involved in the catabolism of quinate. Allows the utilization of quinate as carbon source via the beta-ketoadipate pathway. This is Catabolic 3-dehydroquinase from Debaryomyces hansenii (strain ATCC 36239 / CBS 767 / BCRC 21394 / JCM 1990 / NBRC 0083 / IGC 2968) (Yeast).